The following is a 489-amino-acid chain: 3-octaprenyl-4-hydroxybenzoate carboxy-lyase (489 aa).

Residue asparagine 172 participates in Mn(2+) binding. Prenylated FMN-binding positions include 175 to 177, 189 to 191, and 194 to 195; these read IYR, RWL, and RG. Glutamate 238 provides a ligand contact to Mn(2+). Aspartate 287 acts as the Proton donor in catalysis.

The protein belongs to the UbiD family. As to quaternary structure, homohexamer. It depends on prenylated FMN as a cofactor. Mn(2+) is required as a cofactor.

It is found in the cell membrane. The enzyme catalyses a 4-hydroxy-3-(all-trans-polyprenyl)benzoate + H(+) = a 2-(all-trans-polyprenyl)phenol + CO2. It participates in cofactor biosynthesis; ubiquinone biosynthesis. In terms of biological role, catalyzes the decarboxylation of 3-octaprenyl-4-hydroxy benzoate to 2-octaprenylphenol, an intermediate step in ubiquinone biosynthesis. The sequence is that of 3-octaprenyl-4-hydroxybenzoate carboxy-lyase from Psychromonas ingrahamii (strain DSM 17664 / CCUG 51855 / 37).